The chain runs to 235 residues: Ubiquinone biosynthesis O-methyltransferase (235 aa).

Positions 39, 59, 80, and 124 each coordinate S-adenosyl-L-methionine.

The protein belongs to the methyltransferase superfamily. UbiG/COQ3 family.

It carries out the reaction a 3-demethylubiquinol + S-adenosyl-L-methionine = a ubiquinol + S-adenosyl-L-homocysteine + H(+). The catalysed reaction is a 3-(all-trans-polyprenyl)benzene-1,2-diol + S-adenosyl-L-methionine = a 2-methoxy-6-(all-trans-polyprenyl)phenol + S-adenosyl-L-homocysteine + H(+). Its pathway is cofactor biosynthesis; ubiquinone biosynthesis. O-methyltransferase that catalyzes the 2 O-methylation steps in the ubiquinone biosynthetic pathway. This Photobacterium profundum (strain SS9) protein is Ubiquinone biosynthesis O-methyltransferase.